We begin with the raw amino-acid sequence, 114 residues long: Nucleoid-associated protein NT01CX_0824 (114 aa).

It belongs to the YbaB/EbfC family. Homodimer.

It is found in the cytoplasm. The protein resides in the nucleoid. Functionally, binds to DNA and alters its conformation. May be involved in regulation of gene expression, nucleoid organization and DNA protection. The protein is Nucleoid-associated protein NT01CX_0824 of Clostridium novyi (strain NT).